A 190-amino-acid chain; its full sequence is Holliday junction branch migration complex subunit RuvA (190 aa).

Residues 1-64 (MIGRITGTLI…EDAQLLYGFG (64 aa)) form a domain I region. Positions 65 to 137 (SSAERSTFRE…MRGKLGADIG (73 aa)) are domain II. Residues 137 to 141 (GATPH) are flexible linker. The segment at 142–190 (AAGGHQSDILNALLALGYSDKESQAALKKLPEGVDVSEGIRLALKALVR) is domain III.

Belongs to the RuvA family. Homotetramer. Forms an RuvA(8)-RuvB(12)-Holliday junction (HJ) complex. HJ DNA is sandwiched between 2 RuvA tetramers; dsDNA enters through RuvA and exits via RuvB. An RuvB hexamer assembles on each DNA strand where it exits the tetramer. Each RuvB hexamer is contacted by two RuvA subunits (via domain III) on 2 adjacent RuvB subunits; this complex drives branch migration. In the full resolvosome a probable DNA-RuvA(4)-RuvB(12)-RuvC(2) complex forms which resolves the HJ.

The protein localises to the cytoplasm. Its function is as follows. The RuvA-RuvB-RuvC complex processes Holliday junction (HJ) DNA during genetic recombination and DNA repair, while the RuvA-RuvB complex plays an important role in the rescue of blocked DNA replication forks via replication fork reversal (RFR). RuvA specifically binds to HJ cruciform DNA, conferring on it an open structure. The RuvB hexamer acts as an ATP-dependent pump, pulling dsDNA into and through the RuvAB complex. HJ branch migration allows RuvC to scan DNA until it finds its consensus sequence, where it cleaves and resolves the cruciform DNA. The polypeptide is Holliday junction branch migration complex subunit RuvA (Bordetella parapertussis (strain 12822 / ATCC BAA-587 / NCTC 13253)).